The sequence spans 438 residues: GDP-mannose 6-dehydrogenase (438 aa).

NAD(+) is bound by residues Y10, V11, D30, K35, T86, and T124. 10 residues coordinate GDP-alpha-D-mannuronate: E161, K210, N214, H217, N225, Y256, Y257, R259, F262, and G265. Residue C268 is part of the active site. K271 serves as a coordination point for NAD(+). K324 provides a ligand contact to GDP-alpha-D-mannuronate. Residue R331 coordinates NAD(+).

This sequence belongs to the UDP-glucose/GDP-mannose dehydrogenase family.

The enzyme catalyses GDP-alpha-D-mannose + 2 NAD(+) + H2O = GDP-alpha-D-mannuronate + 2 NADH + 3 H(+). It functions in the pathway glycan biosynthesis; alginate biosynthesis. Catalyzes the oxidation of guanosine diphospho-D-mannose (GDP-D-mannose) to GDP-D-mannuronic acid, a precursor for alginate polymerization. The alginate layer causes a mucoid phenotype and provides a protective barrier against host immune defenses and antibiotics. The sequence is that of GDP-mannose 6-dehydrogenase (algD) from Pseudomonas putida (strain ATCC 47054 / DSM 6125 / CFBP 8728 / NCIMB 11950 / KT2440).